We begin with the raw amino-acid sequence, 446 residues long: Probable E3 ubiquitin-protein ligase XBOS31 (446 aa).

ANK repeat units follow at residues 46–75 (DRFT…DVDV), 79–108 (KKQT…NVLT), 113–142 (RART…QAQG), 160–189 (RGAT…IVSA), and 197–227 (PGST…RLQR). The segment at 317 to 366 (CNICFEQACSMEVKECGHQMCAACTLAICCHSKPNPKTLLLHPPACPFCR) adopts an RING-type zinc-finger fold. The segment at 376–401 (TTNSNKTNSRRRSRSRSSSFKGGLSS) is disordered.

The catalysed reaction is S-ubiquitinyl-[E2 ubiquitin-conjugating enzyme]-L-cysteine + [acceptor protein]-L-lysine = [E2 ubiquitin-conjugating enzyme]-L-cysteine + N(6)-ubiquitinyl-[acceptor protein]-L-lysine.. Its pathway is protein modification; protein ubiquitination. The chain is Probable E3 ubiquitin-protein ligase XBOS31 (XBOS31) from Oryza sativa subsp. japonica (Rice).